The primary structure comprises 994 residues: Regulator of telomere elongation helicase 1 homolog (994 aa).

A Helicase ATP-binding domain is found at 15-324 (SKTSIKFPFE…KLIENLRTED (310 aa)). 50–57 (SPTGTGKT) is a binding site for ATP. Positions 142, 160, 169, and 208 each coordinate [4Fe-4S] cluster. Residues 251 to 254 (DEAH) carry the DEAH box motif. Basic and acidic residues predominate over residues 818–831 (KIEKKEKIEPRPIK). The tract at residues 818–896 (KIEKKEKIEP…HVVSGSEPPK (79 aa)) is disordered. The segment covering 833–844 (DSSSSSVFSLPT) has biased composition (polar residues). Residues 847-856 (DELKVKKWEQ) are compositionally biased toward basic and acidic residues. 2 stretches are compositionally biased toward polar residues: residues 859-869 (DSQTNVSSSSD) and 880-889 (PGNSSGQHVV).

This sequence belongs to the helicase family. RAD3/XPD subfamily.

It is found in the nucleus. The catalysed reaction is ATP + H2O = ADP + phosphate + H(+). Functionally, a probable ATP-dependent DNA helicase implicated in DNA repair and the maintenance of genomic stability. Acts as an anti-recombinase to counteract toxic recombination and limit crossover during meiosis. Regulates meiotic recombination and crossover homeostasis by physically dissociating strand invasion events and thereby promotes noncrossover repair by meiotic synthesis dependent strand annealing (SDSA) as well as disassembly of D loop recombination intermediates. This Caenorhabditis briggsae protein is Regulator of telomere elongation helicase 1 homolog.